Here is a 463-residue protein sequence, read N- to C-terminus: Argininosuccinate lyase (463 aa).

2-(N(omega)-L-arginino)succinate is bound by residues Ser27, Asn115, and Thr161. Residue His162 is the Proton acceptor of the active site. Residue Ser283 is the Proton donor of the active site. Residues Asn291, Tyr323, Gln328, and Lys331 each coordinate 2-(N(omega)-L-arginino)succinate.

Belongs to the lyase 1 family. Argininosuccinate lyase subfamily. Homotetramer.

It carries out the reaction 2-(N(omega)-L-arginino)succinate = fumarate + L-arginine. It participates in amino-acid biosynthesis; L-arginine biosynthesis; L-arginine from L-ornithine and carbamoyl phosphate: step 3/3. In Saccharomyces paradoxus (Yeast), this protein is Argininosuccinate lyase (ARG4).